Consider the following 101-residue polypeptide: Secreted RxLR effector protein 64 (101 aa).

The first 23 residues, 1-23 (MMSPPMTTTLMFILNYAIISFHG), serve as a signal peptide directing secretion. The RxLR signature appears at 48–51 (RELR). A helical membrane pass occupies residues 67 to 87 (LQPILPLPLCLPFPLVPASIF).

Belongs to the RxLR effector family.

It localises to the secreted. Its subcellular location is the host cytoplasm. The protein localises to the host nucleus. It is found in the membrane. In terms of biological role, effector that acts as a broad suppressor of cell death to interrupt plant immunity. Inhibits cell death induced by cell death-inducing proteins, including the PAMP elicitor INF1 from P.infestans. The protein is Secreted RxLR effector protein 64 of Plasmopara viticola (Downy mildew of grapevine).